The sequence spans 317 residues: 17-beta-hydroxysteroid dehydrogenase type 6 (317 aa).

The signal sequence occupies residues 1–17 (MWLYLAAFVGLYYLLHW). An NAD(+)-binding site is contributed by 33–57 (FITGCDSGFGNLLARQLDARGLRVL). N161 carries an N-linked (GlcNAc...) asparagine glycan. S164 contributes to the substrate binding site. Y176 (proton acceptor) is an active-site residue. N-linked (GlcNAc...) asparagine glycosylation is found at N215 and N256.

The protein belongs to the short-chain dehydrogenases/reductases (SDR) family. Detected in liver and prostate (at protein level). Detected in adult liver, lung, brain, placenta, prostate, adrenal gland, testis, mammary gland, spleen, spinal cord and uterus. Detected in caudate nucleus, and at lower levels in amygdala, corpus callosum, hippocampus, substantia nigra and thalamus. Detected in fetal lung, liver and brain.

Its subcellular location is the microsome membrane. It localises to the early endosome membrane. It carries out the reaction all-trans-retinol--[retinol-binding protein] + NAD(+) = all-trans-retinal--[retinol-binding protein] + NADH + H(+). The catalysed reaction is all-trans-retinol + NAD(+) = all-trans-retinal + NADH + H(+). It catalyses the reaction androsterone + NAD(+) = 5alpha-androstan-3,17-dione + NADH + H(+). The enzyme catalyses testosterone + NAD(+) = androst-4-ene-3,17-dione + NADH + H(+). It carries out the reaction 5alpha-androstane-3alpha,17beta-diol + NAD(+) = 17beta-hydroxy-5alpha-androstan-3-one + NADH + H(+). The catalysed reaction is 17beta-estradiol + NAD(+) = estrone + NADH + H(+). It catalyses the reaction 17beta-estradiol + NADP(+) = estrone + NADPH + H(+). The enzyme catalyses 3alpha-hydroxy-5alpha-pregnan-20-one + NAD(+) = 5alpha-pregnane-3,20-dione + NADH + H(+). It carries out the reaction 5alpha-androstane-3beta,17beta-diol + NAD(+) = 17beta-hydroxy-5alpha-androstan-3-one + NADH + H(+). The catalysed reaction is 3beta-hydroxy-5alpha-androstan-17-one + NAD(+) = 5alpha-androstan-3,17-dione + NADH + H(+). NAD-dependent oxidoreductase with broad substrate specificity that shows both oxidative and reductive activity (in vitro). Has 17-beta-hydroxysteroid dehydrogenase activity towards various steroids (in vitro). Converts 5-alpha-androstan-3-alpha,17-beta-diol to androsterone and estradiol to estrone (in vitro). Has 3-alpha-hydroxysteroid dehydrogenase activity towards androsterone (in vitro). Has retinol dehydrogenase activity towards all-trans-retinol (in vitro). Can convert androsterone to epi-androsterone. Androsterone is first oxidized to 5-alpha-androstane-3,17-dione and then reduced to epi-andosterone. Can act on both C-19 and C-21 3-alpha-hydroxysteroids. This is 17-beta-hydroxysteroid dehydrogenase type 6 (HSD17B6) from Homo sapiens (Human).